A 1142-amino-acid polypeptide reads, in one-letter code: GPI inositol-deacylase (1142 aa).

Residues 24 to 59 (GFYKRNNANTASNDEKPNLEQNDIPSVTSSGSSTPS) form a disordered region. Positions 47–59 (IPSVTSSGSSTPS) are enriched in low complexity. A helical membrane pass occupies residues 81–101 (SWSLYVAIIAILLLLVILHSF). Serine 264 is an active-site residue. N-linked (GlcNAc...) asparagine glycans are attached at residues asparagine 596 and asparagine 679. Transmembrane regions (helical) follow at residues 741–761 (LLASFPVVVISLAAYNQFRYF), 781–801 (GLIKLLFLVSILSIAFSYLIS), 849–869 (LLTLMFVGLVITASVIILCVM), and 946–966 (IIGIMLLLLMAMTVVPFQLVY). Asparagine 1002 is a glycosylation site (N-linked (GlcNAc...) asparagine). A helical transmembrane segment spans residues 1006-1026 (TITILMLLLAPLDFPVLIVWA). Asparagine 1028 carries an N-linked (GlcNAc...) asparagine glycan. The next 3 helical transmembrane spans lie at 1035–1055 (IPFPTHHNFFSIIPFILLTEI), 1075–1095 (VFLFLLSFYSLIYGAEKPYLI), and 1097–1117 (NVVGLYFFWLLFLYAKNGFFV). Asparagine 1119 carries an N-linked (GlcNAc...) asparagine glycan.

It belongs to the GPI inositol-deacylase family.

It is found in the endoplasmic reticulum membrane. Functionally, involved in inositol deacylation of GPI-anchored proteins which plays important roles in the quality control and ER-associated degradation of GPI-anchored proteins. This Schizosaccharomyces pombe (strain 972 / ATCC 24843) (Fission yeast) protein is GPI inositol-deacylase (bst1).